The chain runs to 276 residues: Elongation factor Ts (276 aa).

The involved in Mg(2+) ion dislocation from EF-Tu stretch occupies residues 81 to 84 (TDFV).

It belongs to the EF-Ts family.

It localises to the cytoplasm. Its function is as follows. Associates with the EF-Tu.GDP complex and induces the exchange of GDP to GTP. It remains bound to the aminoacyl-tRNA.EF-Tu.GTP complex up to the GTP hydrolysis stage on the ribosome. This is Elongation factor Ts from Leifsonia xyli subsp. xyli (strain CTCB07).